The primary structure comprises 373 residues: Anhydro-N-acetylmuramic acid kinase (373 aa).

An ATP-binding site is contributed by 12 to 19; that stretch reads GTSLDGVD.

The protein belongs to the anhydro-N-acetylmuramic acid kinase family.

It catalyses the reaction 1,6-anhydro-N-acetyl-beta-muramate + ATP + H2O = N-acetyl-D-muramate 6-phosphate + ADP + H(+). The protein operates within amino-sugar metabolism; 1,6-anhydro-N-acetylmuramate degradation. It functions in the pathway cell wall biogenesis; peptidoglycan recycling. In terms of biological role, catalyzes the specific phosphorylation of 1,6-anhydro-N-acetylmuramic acid (anhMurNAc) with the simultaneous cleavage of the 1,6-anhydro ring, generating MurNAc-6-P. Is required for the utilization of anhMurNAc either imported from the medium or derived from its own cell wall murein, and thus plays a role in cell wall recycling. The polypeptide is Anhydro-N-acetylmuramic acid kinase (Serratia proteamaculans (strain 568)).